The following is a 597-amino-acid chain: Putative lipase ATG15 (597 aa).

The Cytoplasmic portion of the chain corresponds to 1–15; that stretch reads MTLEKNRHANKGTSW. A helical; Signal-anchor for type II membrane protein membrane pass occupies residues 16-36; sequence TWMIYKFVVGVITVAILVLFI. The Lumenal portion of the chain corresponds to 37 to 597; that stretch reads TQKSVSQAQD…DDDEDTFERK (561 aa). N195, N262, and N346 each carry an N-linked (GlcNAc...) asparagine glycan. S364 (charge relay system) is an active-site residue. N481 is a glycosylation site (N-linked (GlcNAc...) asparagine). Positions 507 to 570 are disordered; the sequence is EKDEPKLPNP…PTDQDPPKKC (64 aa). Residues 519–554 are compositionally biased toward low complexity; sequence SSSKSTLSTKTTSLKSSSTYSGSTSSSTVTKTTQTS.

Belongs to the AB hydrolase superfamily. Lipase family. In terms of assembly, binds to both phosphatidylinositol (PI) and phosphatidylinositol 3,5-bisphosphate (PIP2).

The protein resides in the endosome. The protein localises to the multivesicular body membrane. It is found in the prevacuolar compartment membrane. The catalysed reaction is a triacylglycerol + H2O = a diacylglycerol + a fatty acid + H(+). In terms of biological role, lipase which is essential for lysis of subvacuolar cytoplasm to vacuole targeted bodies and intravacuolar autophagic bodies. Involved in the lysis of intravacuolar multivesicular body (MVB) vesicles. The intravacuolar membrane disintegration by ATG15 is critical to life span extension. The polypeptide is Putative lipase ATG15 (ATG15) (Candida albicans (strain SC5314 / ATCC MYA-2876) (Yeast)).